Consider the following 456-residue polypeptide: IQ domain-containing protein IQM3 (456 aa).

Positions 46–75 (TRLAAVKVQKVYRSYRTRRRLADSVVVAEE) constitute an IQ domain. The segment at 315–358 (SEDSDSYDDYVKSNGGSEPEPLKKEDTTFQAETETDENGNGTVG) is disordered.

In terms of tissue distribution, expressed in roots, rosette and cauline leaves, flowers and siliques, and at lower levels in stems.

Its subcellular location is the cytoplasm. The protein resides in the nucleus. In terms of biological role, may be involved in biotic and abiotic stress responses. In Arabidopsis thaliana (Mouse-ear cress), this protein is IQ domain-containing protein IQM3.